A 318-amino-acid polypeptide reads, in one-letter code: MANTLEQFKSITTIVADTGDIEAIKRYQPQDATTNPSLILKAAQIPEYKHLIANAIEWAKAQSDDLAQQVEDAGDKLAVNIGLEILKIVPGRISTEVDARLSFDKAGSIEKAHKLIKLYEEAGIDKSRILIKLASTWEGICAAKELEKEGINCNLTLLFCFAQARACAEAGVYLISPFVGRILDWYKKDTGLEYSAAEDPGVVSVTNIYNYYKRHGYKTVVMGASFRNTGEIIELAGCDRLTIGPALLEEMANSDTPVVQKLQAANEVVAPGAALSEAEFRWEFNQDAMAVEKLAEGIRNFAIDQGKLETMLKAELEA.

Lys-132 serves as the catalytic Schiff-base intermediate with substrate.

It belongs to the transaldolase family. Type 1 subfamily. In terms of assembly, homodimer.

Its subcellular location is the cytoplasm. It catalyses the reaction D-sedoheptulose 7-phosphate + D-glyceraldehyde 3-phosphate = D-erythrose 4-phosphate + beta-D-fructose 6-phosphate. Its pathway is carbohydrate degradation; pentose phosphate pathway; D-glyceraldehyde 3-phosphate and beta-D-fructose 6-phosphate from D-ribose 5-phosphate and D-xylulose 5-phosphate (non-oxidative stage): step 2/3. Functionally, transaldolase is important for the balance of metabolites in the pentose-phosphate pathway. In Shewanella loihica (strain ATCC BAA-1088 / PV-4), this protein is Transaldolase.